A 552-amino-acid polypeptide reads, in one-letter code: Membrane protein insertase YidC (552 aa).

A helical membrane pass occupies residues 6–26 (NLLLAAIAAVILMLFIRWNHF). Composition is skewed to polar residues over residues 32 to 41 (QHQAGNTPAG) and 60 to 70 (PTASDTPQATA). Residues 32 to 70 (QHQAGNTPAGSSIAAIAPDSNGDIPSAVPTASDTPQATA) are disordered. The next 4 helical transmembrane spans lie at 365-387 (WGLA…SAAS), 431-451 (FGGC…YWVL), 472-492 (MDPY…MQKL), and 508-528 (LPFV…LYWV).

Belongs to the OXA1/ALB3/YidC family. Type 1 subfamily. Interacts with the Sec translocase complex via SecD. Specifically interacts with transmembrane segments of nascent integral membrane proteins during membrane integration.

It localises to the cell inner membrane. Functionally, required for the insertion and/or proper folding and/or complex formation of integral membrane proteins into the membrane. Involved in integration of membrane proteins that insert both dependently and independently of the Sec translocase complex, as well as at least some lipoproteins. Aids folding of multispanning membrane proteins. The chain is Membrane protein insertase YidC from Cellvibrio japonicus (strain Ueda107) (Pseudomonas fluorescens subsp. cellulosa).